The following is a 363-amino-acid chain: Spindle pole body component SPC42 (363 aa).

Positions 60–137 (EFINKAVQQN…ANSTFKEMRF (78 aa)) form a coiled coil. Residues 160–184 (PKHRAPDATGNPRTTNKVSNTSDQD) form a disordered region. A compositionally biased stretch (polar residues) spans 170-182 (NPRTTNKVSNTSD). Phosphoserine occurs at positions 213, 217, 284, and 329. A coiled-coil region spans residues 249-298 (DIMMYESAELKRVEEEIEELKRKILVRKKHDLRKLSLNNQLQELQSMMDG). The tract at residues 310-363 (HNHATHRHSSQSSRDYSPSSDACLECSNDLYEKNRVKPENNMSETFATPTPNNR) is disordered. Low complexity predominate over residues 319-329 (SQSSRDYSPSS). Residues 349-363 (NNMSETFATPTPNNR) are compositionally biased toward polar residues.

The protein belongs to the SPC42 family. As to quaternary structure, component of the SPC110 complex containing at least CMD1, SPC29, SPC42 and SCP110.

Its subcellular location is the nucleus. It localises to the cytoplasm. It is found in the cytoskeleton. The protein resides in the microtubule organizing center. The protein localises to the spindle pole body. Functionally, forms a polymeric layer at the periphery of the spindle pole body (SPB) central plaque which has an essential function during SPB duplication and may facilitate attachment of the SPB to the nuclear membrane. The chain is Spindle pole body component SPC42 (SPC42) from Saccharomyces cerevisiae (strain ATCC 204508 / S288c) (Baker's yeast).